Consider the following 592-residue polypeptide: Neurogenic locus notch homolog protein (592 aa).

The first 19 residues, 1–19, serve as a signal peptide directing secretion; the sequence is MIFVLTLVALCTAIHCPDG. EGF-like domains lie at 64-104, 106-146, 267-307, 353-387, 453-488, and 546-588; these read YPSI…DYQV, VPEA…EKCT, YPEA…NTCI, NSQT…PTCE, VPNS…ALCE, and IDGE…KHCN. Cystine bridges form between cysteine 68–cysteine 82, cysteine 76–cysteine 92, cysteine 110–cysteine 123, cysteine 117–cysteine 134, cysteine 136–cysteine 145, cysteine 271–cysteine 284, cysteine 278–cysteine 293, cysteine 295–cysteine 306, cysteine 362–cysteine 375, cysteine 377–cysteine 386, cysteine 457–cysteine 471, cysteine 478–cysteine 487, cysteine 550–cysteine 565, cysteine 555–cysteine 576, and cysteine 578–cysteine 587. Asparagine 552 carries an N-linked (GlcNAc...) asparagine glycan.

Belongs to the NOTCH family. Interacts with EB1.

The protein resides in the cell projection. The protein localises to the cilium. It localises to the flagellum. Its subcellular location is the cytoplasm. It is found in the cytoskeleton. The protein resides in the flagellum axoneme. In Giardia intestinalis (strain ATCC 50803 / WB clone C6) (Giardia lamblia), this protein is Neurogenic locus notch homolog protein.